We begin with the raw amino-acid sequence, 195 residues long: Ribosomal RNA small subunit methyltransferase G (195 aa).

Residues glycine 60, leucine 65, 114–115, and arginine 128 each bind S-adenosyl-L-methionine; that span reads IE.

This sequence belongs to the methyltransferase superfamily. RNA methyltransferase RsmG family.

The protein localises to the cytoplasm. The enzyme catalyses guanosine(527) in 16S rRNA + S-adenosyl-L-methionine = N(7)-methylguanosine(527) in 16S rRNA + S-adenosyl-L-homocysteine. Its function is as follows. Specifically methylates the N7 position of guanine in position 527 of 16S rRNA. The sequence is that of Ribosomal RNA small subunit methyltransferase G from Dinoroseobacter shibae (strain DSM 16493 / NCIMB 14021 / DFL 12).